The primary structure comprises 329 residues: Gibberellin 2-beta-dioxygenase 1 (329 aa).

The Fe2OG dioxygenase domain occupies 165-273; it reads NTDSILRLNH…RVSMIYFAGP (109 aa). Fe cation-binding residues include H197, D199, and H254. R264 is a catalytic residue. R264 is a 2-oxoglutarate binding site.

The protein belongs to the iron/ascorbate-dependent oxidoreductase family. GA2OX subfamily. The cofactor is Fe(2+). As to expression, preferentially expressed in flowers, siliques, and upper stems. Not expressed in the apex.

It catalyses the reaction gibberellin A1 + 2-oxoglutarate + O2 = gibberellin A8 + succinate + CO2. It functions in the pathway plant hormone biosynthesis; gibberellin biosynthesis. Functionally, catalyzes the 2-beta-hydroxylation of several biologically active gibberellins, leading to the homeostatic regulation of their endogenous level. Catabolism of gibberellins (GAs) plays a central role in plant development. Converts GA9/GA20 to GA51/GA29 and GA4/GA1 to GA34/GA8. The protein is Gibberellin 2-beta-dioxygenase 1 (GA2OX1) of Arabidopsis thaliana (Mouse-ear cress).